The primary structure comprises 274 residues: MITFPNAKINLGLNITEKRPDGYHNLETVFYPIPLEDALEITILNDSKQKFVLHQSGLEISGEPETNLVVKAYLLLEQEFQLPPVDIYLYKHIPSGAGLGGGSADAAFMLKLLNEKFNLHLADEKLEEYAAILGADCAFFIKNKPTFAEGIGNIFSPVDLSLKGYQLVLVKPDVFVSTRDAFSQIKPHYPDHSLKEIIRRPVSEWKNCMFNDFEKSVFPQYPVIEEIKKELYSKGAIYAAMSGSGSSVFGLFSPEEKITKMDFEAAFCFQTELK.

K8 is an active-site residue. An ATP-binding site is contributed by 94-104; sequence PSGAGLGGGSA. D136 is an active-site residue.

Belongs to the GHMP kinase family. IspE subfamily.

The enzyme catalyses 4-CDP-2-C-methyl-D-erythritol + ATP = 4-CDP-2-C-methyl-D-erythritol 2-phosphate + ADP + H(+). Its pathway is isoprenoid biosynthesis; isopentenyl diphosphate biosynthesis via DXP pathway; isopentenyl diphosphate from 1-deoxy-D-xylulose 5-phosphate: step 3/6. Functionally, catalyzes the phosphorylation of the position 2 hydroxy group of 4-diphosphocytidyl-2C-methyl-D-erythritol. The polypeptide is 4-diphosphocytidyl-2-C-methyl-D-erythritol kinase (Bacteroides fragilis (strain ATCC 25285 / DSM 2151 / CCUG 4856 / JCM 11019 / LMG 10263 / NCTC 9343 / Onslow / VPI 2553 / EN-2)).